The primary structure comprises 133 residues: Fluoride-specific ion channel FluC (133 aa).

4 helical membrane passes run 12–32 (LAMTGGALGSGLRFAIGASLI), 41–61 (WGTLTVNLLGSFVAGVLLVWL), 76–96 (IVGVIGGLTTFSSLMMECLVF), and 104–124 (MIGIYLAVTLLAGLALVFAGA). Na(+) is bound by residues glycine 81 and threonine 84.

This sequence belongs to the fluoride channel Fluc/FEX (TC 1.A.43) family.

The protein localises to the cell inner membrane. The enzyme catalyses fluoride(in) = fluoride(out). Its activity is regulated as follows. Na(+) is not transported, but it plays an essential structural role and its presence is essential for fluoride channel function. In terms of biological role, fluoride-specific ion channel. Important for reducing fluoride concentration in the cell, thus reducing its toxicity. This Xanthomonas axonopodis pv. citri (strain 306) protein is Fluoride-specific ion channel FluC.